Consider the following 670-residue polypeptide: Probable membrane-anchored ferredoxin csal_0991 (670 aa).

A run of 5 helical transmembrane segments spans residues 2–22 (LDIL…IGAV), 68–90 (VATA…LGLA), 94–113 (LGWL…LFVA), 135–155 (LMAF…VLPA), and 159–179 (GWLV…ELVF). 2 4Fe-4S ferredoxin-type domains span residues 241–271 (WNQL…PLNP) and 316–347 (GTAL…HVDA). Cys250, Cys253, Cys256, Cys260, Cys328, Cys331, Cys334, and Cys338 together coordinate [4Fe-4S] cluster. Residues 648–670 (NTPPATPASHDTAASQATEEVLS) form a disordered region. Positions 659–670 (TAASQATEEVLS) are enriched in polar residues.

Requires [4Fe-4S] cluster as cofactor.

The protein resides in the cell inner membrane. Participates in the electron transfer process during N,N-dimethylglycine (DMG) degradation to sarcosine. Probably transfers the electrons from N,N-dimethylglycine/sarcosine dehydrogenase (DMGDH) to the electron transfer flavoprotein (ETF) EtfA-EtfB. The sequence is that of Probable membrane-anchored ferredoxin csal_0991 from Chromohalobacter salexigens (strain ATCC BAA-138 / DSM 3043 / CIP 106854 / NCIMB 13768 / 1H11).